Here is a 159-residue protein sequence, read N- to C-terminus: Lipoprotein LpqH (159 aa).

The first 21 residues, Met-1–Gly-21, serve as a signal peptide directing secretion. Residue Cys-22 is the site of N-palmitoyl cysteine attachment. A lipid anchor (S-diacylglycerol cysteine) is attached at Cys-22. The segment at Ser-24 to Lys-51 is disordered. A compositionally biased stretch (low complexity) spans Ser-27–Gly-49.

This sequence belongs to the mycobacterial 19 kDa antigen family. Modified by Lgt on Cys-22 with an S-linked diacylglycerol with a mixture of C16, C18 and C19 fatty acids, signal peptide is removed by LspA, modifed by Lnt with an amide-linked mixture of C16 and C19 fatty acids.

It is found in the cell membrane. Might be involved in ligand transport. A host TLR2 agonist, modifies host gene expression in response to pathogen. This chain is Lipoprotein LpqH (lpqH), found in Mycobacterium tuberculosis (strain CDC 1551 / Oshkosh).